The primary structure comprises 165 residues: MCSSDSLQLHNVFVYGSFQDPDVINVMLDRTPEIVSATLPGFQRFRLKGRLYPCIVPSEKGEVHGKVLMGVTSDELENLDAVEGNEYERVTVGIVREDNSEKMAVKTYMWINKADPDMFGEWNFEEWKRLHKKKFIETFKKIMECKKKPQGQGNDDISHVLREDQ.

15–20 (YGSFQD) lines the substrate pocket. Glu-83 serves as the catalytic Proton acceptor.

Belongs to the gamma-glutamylcyclotransferase family. As to expression, expressed only in seeds.

In terms of biological role, putative gamma-glutamylcyclotransferase. This chain is AIG2-like protein A, found in Arabidopsis thaliana (Mouse-ear cress).